The following is a 153-amino-acid chain: MATLEQKLQELVADPIDAMGFELVGVECQRAGRFLTVRLYIDKEGGVTVDDCSDVSRQVSAIFDVEDPIADKYNLEVSSPGLDRPLFTLAHYQRFVGREIVVHLRIPMLDRRKWQGELVSVEGDLITLKVDGNLQAFAFGNIQKANLIPVFNF.

Belongs to the RimP family.

It is found in the cytoplasm. Functionally, required for maturation of 30S ribosomal subunits. The protein is Ribosome maturation factor RimP of Glaesserella parasuis serovar 5 (strain SH0165) (Haemophilus parasuis).